A 305-amino-acid chain; its full sequence is Ribonuclease BN (305 aa).

7 residues coordinate Zn(2+): histidine 64, histidine 66, aspartate 68, histidine 69, histidine 141, aspartate 212, and histidine 270. Aspartate 68 (proton acceptor) is an active-site residue.

This sequence belongs to the RNase Z family. RNase BN subfamily. Homodimer. It depends on Zn(2+) as a cofactor.

Zinc phosphodiesterase, which has both exoribonuclease and endoribonuclease activities. The sequence is that of Ribonuclease BN from Escherichia coli O81 (strain ED1a).